Consider the following 421-residue polypeptide: Uracil permease (421 aa).

A run of 12 helical transmembrane segments spans residues isoleucine 18–leucine 38, isoleucine 41–cysteine 61, isoleucine 65–threonine 85, glutamate 89–valine 109, glycine 115–leucine 135, proline 160–phenylalanine 180, isoleucine 186–valine 206, isoleucine 232–valine 252, valine 304–glycine 324, leucine 329–isoleucine 349, isoleucine 371–phenylalanine 391, and methionine 393–isoleucine 413.

Belongs to the nucleobase:cation symporter-2 (NCS2) (TC 2.A.40) family.

The protein localises to the cell membrane. Its activity is regulated as follows. Inhibited by the proton gradient disruptor carbonyl cyanide m-chlorophenylhydrazone (CCCP), but not by the sodium gradient disruptor ouabain. Both xanthine and uric acid act as competitive inhibitors of uracil transport. In terms of biological role, specific for the uptake of uracil. Transport is probably proton-dependent. This Paenibacillus larvae subsp. larvae (strain NRRL B-3650 / LMG 16245) protein is Uracil permease.